The sequence spans 92 residues: Small ribosomal subunit protein uS19 (92 aa).

Belongs to the universal ribosomal protein uS19 family.

Its function is as follows. Protein S19 forms a complex with S13 that binds strongly to the 16S ribosomal RNA. The chain is Small ribosomal subunit protein uS19 from Lysinibacillus sphaericus (strain C3-41).